A 462-amino-acid chain; its full sequence is UDP-N-acetylmuramoylalanine--D-glutamate ligase (462 aa).

Position 125-131 (125-131) interacts with ATP; that stretch reads GSDGKTT.

This sequence belongs to the MurCDEF family.

It localises to the cytoplasm. The enzyme catalyses UDP-N-acetyl-alpha-D-muramoyl-L-alanine + D-glutamate + ATP = UDP-N-acetyl-alpha-D-muramoyl-L-alanyl-D-glutamate + ADP + phosphate + H(+). It participates in cell wall biogenesis; peptidoglycan biosynthesis. Cell wall formation. Catalyzes the addition of glutamate to the nucleotide precursor UDP-N-acetylmuramoyl-L-alanine (UMA). The protein is UDP-N-acetylmuramoylalanine--D-glutamate ligase of Clostridium acetobutylicum (strain ATCC 824 / DSM 792 / JCM 1419 / IAM 19013 / LMG 5710 / NBRC 13948 / NRRL B-527 / VKM B-1787 / 2291 / W).